The primary structure comprises 116 residues: uncharacterized protein (116 aa).

This is an uncharacterized protein from Methanocaldococcus jannaschii (strain ATCC 43067 / DSM 2661 / JAL-1 / JCM 10045 / NBRC 100440) (Methanococcus jannaschii).